Consider the following 203-residue polypeptide: Glutathione S-transferase 2 (203 aa).

Residues 1 to 78 (MPKVVFHYFG…YLGRKYGLAG (78 aa)) enclose the GST N-terminal domain. Glutathione-binding positions include Tyr-8, Trp-38, Lys-42, 48-50 (GQM), and 62-63 (QS). Positions 80 to 203 (DIEEDFEIDQ…YLDSAPKKEF (124 aa)) constitute a GST C-terminal domain.

Belongs to the GST superfamily. Sigma family. In terms of assembly, homodimer.

It carries out the reaction RX + glutathione = an S-substituted glutathione + a halide anion + H(+). Functionally, conjugation of reduced glutathione to a wide number of exogenous and endogenous hydrophobic electrophiles. In Manduca sexta (Tobacco hawkmoth), this protein is Glutathione S-transferase 2 (GST2).